The chain runs to 355 residues: MPVLHNRISNEELKARMLAETEPRTTVSFYKYFTIDDPKAFRDRLYIQLEQCKVLGRIYIATEGINAQISVPNNQFDAFKAVLFSAHPALDQIRLNIALEDDGKSFWVLRMKVRERIVADGIDDPTFNPANVGQYLKADQVNAMADDPDTVFVDMRNHYEYEVGHFENALEVPSDTFREQLPMAVEMLDEARDKNIVMYCTGGIRCEKASAYMLHHGFKNVYHVEGGIIEYARQAKAQGLPLKFIGKNFVFDERMGERISDDVIAHCHQCGASCDSHTNCRNEGCHLLFIQCPTCAAKYEGCCSTQCLDEMKLPLEEQRAIRSGRENGMKIFNKSKGLLQSTLHIPAPEVKDKAE.

In terms of domain architecture, Rhodanese spans 146 to 240 (DDPDTVFVDM…YARQAKAQGL (95 aa)). The active-site Cysteine persulfide intermediate is the Cys200.

Belongs to the TrhO family.

It carries out the reaction uridine(34) in tRNA + AH2 + O2 = 5-hydroxyuridine(34) in tRNA + A + H2O. In terms of biological role, catalyzes oxygen-dependent 5-hydroxyuridine (ho5U) modification at position 34 in tRNAs. The protein is tRNA uridine(34) hydroxylase of Pectobacterium carotovorum subsp. carotovorum (strain PC1).